A 257-amino-acid chain; its full sequence is MLAKRIVPCLDVRDGKVVKGVQFRNHEIVGDIVPLAARYAAESADELVFYDITASAHDRVVDKSWVSRVAEQIDIPFCVAGGIKSIEQAREKLAFGADKISINSPALSDPGLIDRLQDEFGRQCIVIGIDSYYDADTDSYKVKQFTGDEAATKDTQWYTQDWVEEVQRRGCGEIVLNVMNQDGVRQGYDIKQLAMVRAICDVPLIASGGAGTMEHFLEVFTQAGVDAALAASVFHKGIIEIEALKRYLLDNGVQMRL.

Catalysis depends on residues Asp11 and Asp130.

It belongs to the HisA/HisF family. As to quaternary structure, heterodimer of HisH and HisF.

It localises to the cytoplasm. It carries out the reaction 5-[(5-phospho-1-deoxy-D-ribulos-1-ylimino)methylamino]-1-(5-phospho-beta-D-ribosyl)imidazole-4-carboxamide + L-glutamine = D-erythro-1-(imidazol-4-yl)glycerol 3-phosphate + 5-amino-1-(5-phospho-beta-D-ribosyl)imidazole-4-carboxamide + L-glutamate + H(+). The protein operates within amino-acid biosynthesis; L-histidine biosynthesis; L-histidine from 5-phospho-alpha-D-ribose 1-diphosphate: step 5/9. In terms of biological role, IGPS catalyzes the conversion of PRFAR and glutamine to IGP, AICAR and glutamate. The HisF subunit catalyzes the cyclization activity that produces IGP and AICAR from PRFAR using the ammonia provided by the HisH subunit. The sequence is that of Imidazole glycerol phosphate synthase subunit HisF from Shewanella loihica (strain ATCC BAA-1088 / PV-4).